The primary structure comprises 1161 residues: Lethal(2) giant larvae protein (1161 aa).

Residues aspartate 15–glutamine 86 form a phospho-regulated basic and hydrophobic (PRBH) motif region. WD repeat units lie at residues serine 39–glutamine 72, glutamate 82–leucine 128, valine 131–isoleucine 167, serine 189–tyrosine 223, serine 231–proline 263, serine 278–valine 320, valine 328–leucine 358, and threonine 380–lysine 464. A phosphoserine mark is found at serine 473 and serine 484. WD repeat units follow at residues lysine 513–leucine 594 and threonine 603–serine 664. Serine 679 is subject to Phosphoserine. WD repeat units lie at residues valine 708–glutamine 778, glycine 787–isoleucine 832, leucine 837–alanine 927, and cysteine 941–threonine 964. 6 positions are modified to phosphoserine: serine 808, serine 869, serine 876, serine 887, serine 889, and serine 893. Serine 1013 bears the Phosphoserine mark. The tract at residues glutamate 1141–phenylalanine 1161 is disordered.

This sequence belongs to the WD repeat L(2)GL family. In terms of assembly, may form multimeric complexes. Interacts with mahj. Interacts with aPKC; leading to phosphorylation. Interacts with ball. Post-translationally, phosphorylated by aPKC which lowers lipid affinity and promotes dissociation from the cell cortex. In developing oocytes, aPKC-mediated phosphorylation restricts activity to the oocyte posterior and is required for oocyte polarity formation. As to expression, expressed in the epithelial cells of the digestive tract and in gonads.

The protein resides in the cytoplasm. The protein localises to the cell cortex. In terms of biological role, essential for the development of polarized epithelia, for cell polarity associated with asymmetric cell division of neuroblasts during development, and for oocyte polarity formation. Promotes the formation of actin-rich projections at the oocyte cortex and the posterior enrichment of par-1 which is required for oocyte polarization. Regulates the localization of axis-specifying morphogens such as stau and grk. Its function is as follows. Has an essential role in control of cell proliferation and differentiation during development and could act as a tumor suppressor. Has an accessory function in control of cell proliferation and differentiation during development. The polypeptide is Lethal(2) giant larvae protein (l(2)gl) (Drosophila melanogaster (Fruit fly)).